The sequence spans 141 residues: Galactose-6-phosphate isomerase subunit LacA (141 aa).

This sequence belongs to the LacAB/RpiB family. In terms of assembly, heteromultimeric protein consisting of LacA and LacB.

The enzyme catalyses aldehydo-D-galactose 6-phosphate = keto-D-tagatose 6-phosphate. Its pathway is carbohydrate metabolism; D-galactose 6-phosphate degradation; D-tagatose 6-phosphate from D-galactose 6-phosphate: step 1/1. The sequence is that of Galactose-6-phosphate isomerase subunit LacA from Streptococcus pneumoniae (strain Taiwan19F-14).